We begin with the raw amino-acid sequence, 207 residues long: Glutathione S-transferase 4 (207 aa).

The region spanning 2–79 is the GST N-terminal domain; sequence PNYKLLYFDA…YLARKFGLAG (78 aa). Glutathione is bound by residues Tyr-8, Trp-39, Lys-43, 49–51, and 63–64; these read GQL and QS. A GST C-terminal domain is found at 81-207; that stretch reads TAEEEAYADS…YVATRKDSIV (127 aa).

The protein belongs to the GST superfamily. Sigma family.

It catalyses the reaction RX + glutathione = an S-substituted glutathione + a halide anion + H(+). Conjugation of reduced glutathione to a wide number of exogenous and endogenous hydrophobic electrophiles. May play a role in the detoxification of reactive oxygen species produced during pathogenic bacterial infection. In Caenorhabditis elegans, this protein is Glutathione S-transferase 4.